Here is a 172-residue protein sequence, read N- to C-terminus: MEYFNVGKIVNTQGLQGEMRVLSVSDFTEERFQKGARLALFDDKDRFVQEVEIASHRKHKQFDIIKFKGMYHINAIEQFKGYNLKIAKEHQGKLAEGEFYYHQIIGLEVYEKDQLVGEIKEILQPGANDVWVVKRQSKRDLLLPYIPSVVLCVDIEKHRVDVEIMEGLDDED.

Residues 95 to 168 (AEGEFYYHQI…RVDVEIMEGL (74 aa)) form the PRC barrel domain.

The protein belongs to the RimM family. Binds ribosomal protein uS19.

It localises to the cytoplasm. In terms of biological role, an accessory protein needed during the final step in the assembly of 30S ribosomal subunit, possibly for assembly of the head region. Essential for efficient processing of 16S rRNA. May be needed both before and after RbfA during the maturation of 16S rRNA. It has affinity for free ribosomal 30S subunits but not for 70S ribosomes. The chain is Ribosome maturation factor RimM from Streptococcus equi subsp. zooepidemicus (strain MGCS10565).